Here is a 98-residue protein sequence, read N- to C-terminus: NADH-ubiquinone oxidoreductase chain 4L (98 aa).

3 helical membrane passes run 1–21, 29–49, and 61–81; these read MSMV…GLLM, SLLC…VTIL, and IILL…LVMV.

This sequence belongs to the complex I subunit 4L family. In terms of assembly, core subunit of respiratory chain NADH dehydrogenase (Complex I) which is composed of 45 different subunits.

It localises to the mitochondrion inner membrane. It catalyses the reaction a ubiquinone + NADH + 5 H(+)(in) = a ubiquinol + NAD(+) + 4 H(+)(out). Its function is as follows. Core subunit of the mitochondrial membrane respiratory chain NADH dehydrogenase (Complex I) which catalyzes electron transfer from NADH through the respiratory chain, using ubiquinone as an electron acceptor. Part of the enzyme membrane arm which is embedded in the lipid bilayer and involved in proton translocation. This is NADH-ubiquinone oxidoreductase chain 4L (MT-ND4L) from Phoca fasciata (Ribbon seal).